Reading from the N-terminus, the 492-residue chain is Alpha/beta hydrolase ucsC (492 aa).

Ser-258 functions as the Nucleophile in the catalytic mechanism.

The protein belongs to the AB hydrolase superfamily. FUS2 hydrolase family. Homodimer.

It functions in the pathway mycotoxin biosynthesis. Its function is as follows. Alpha/beta hydrolase; part of the gene cluster that mediates the biosynthesis of UCS1025A, a member of the pyrrolizidinone family that acts as a strong telomerase inhibitor and displays potent antibacterial and antitumor properties. These compounds share a hemiaminal-containing pyrrolizidinone core fused with a gamma-lactone, giving a furopyrrolizidine that is connected to a decalin fragment. The polyketide synthase module (PKS) of the PKS-NRPS ucsA is responsible for the synthesis of the polyketide backbone via the condensation of an acetyl-CoA starter unit with 6 malonyl-CoA units. The downstream nonribosomal peptide synthetase (NRPS) module then amidates the carboxyl end of the polyketide with a 2S,3S-methylproline derived from L-isoleucine by the 2-oxoglutarate-dependent dioxygenase ucsF which converts L-isoleucine to (4S,5S)-4-methylpyrroline-5-carboxylate that is further converted to 2S,3S-methylproline by the pyrroline-5-carboxylate reductase ucsG. Reductive release of the completed aminoacyl polyketide from the assembly line can form the 3-pyrrolin-2-one structure via an intramolecular Knoevenagel reaction. Because ucsA lacks a designated enoylreductase (ER) domain, the required activity is provided the enoyl reductase ucsL. This keto acyclic precursor is the substrate of the Diels-Alderase ucsH, that catalyzes the Diels-Alder cycloaddition. Oxidation of the 3S-methyl group to a carboxylate by the cytochrome P450 monooxygenase ucsK allows an oxa-Michael cyclization that might involve the reductase/dehydrogenase ucsI and which furnishes the furopyrrolizidine. The oxidase ucsJ likely plays a critical role in stereoselective reduction of the C5-C6 double bond to afford the required R-configured carboxylate group. Further enolization and oxidation at C5 by an unidentified enzyme affords the last intermediate that can undergo oxa-Michael cyclization to yield UCS1025A. This Acremonium sp protein is Alpha/beta hydrolase ucsC.